Here is a 67-residue protein sequence, read N- to C-terminus: Conotoxin AbVIM (67 aa).

An N-terminal signal peptide occupies residues 1–17; sequence VLIIAVLFLTACQLIAT. A propeptide spanning residues 18 to 40 is cleaved from the precursor; the sequence is ASYARSERKHPDLRLSSRNSKLS. Intrachain disulfides connect C43/C57, C50/C61, and C56/C66.

This sequence belongs to the conotoxin O1 superfamily. In terms of tissue distribution, expressed by the venom duct.

The protein resides in the secreted. This chain is Conotoxin AbVIM, found in Conus abbreviatus (Abbreviated cone).